An 81-amino-acid chain; its full sequence is U-poneritoxin(01)-Om6a (81 aa).

The first 21 residues, methionine 1 to alanine 21, serve as a signal peptide directing secretion. The propeptide occupies glutamine 22 to proline 43. Alanine 79 is subject to Alanine amide.

It belongs to the formicidae venom precursor-01 superfamily. In terms of processing, truncated sequences of this peptide have also been found in the venom. It is possible they have been cleaved in the venom. As to expression, expressed by the venom gland.

The protein resides in the secreted. Cationic amphipathic alpha-helical peptide with antimicrobial activities against E.coli (MIC=3.1), and S.aureus (MIC=3.1 uM). Also shows histamine-releasing activity (33.6% at 10 uM). Does not have activity against S.cerevisiae. Does not show hemolytic activity, even at 50 uM. This is U-poneritoxin(01)-Om6a from Odontomachus monticola (Trap-jaw ant).